We begin with the raw amino-acid sequence, 404 residues long: MADKVLKDKRRLFVRSVDMGTINGLLDELFEKRVLNHEEMERVRCAHSTVMDQARVLIDSVLRKGPNACQIFISNICNEDIHLAQTLGLSSGSPSGNDHTKLDSQVEVPSLPAFVENMPGPTIPDSEESTDTLKLCPPETFVKMYKEKAEEIYPIKERKDRTRLALIICNIEFDHLSTRDGAELDIAGMESLLEGLGYSVVVKRKLTAKGMESVLREFAARPEHKSSDSTFLVLMSHGILNGICGTAHSVENPDVLAYDTIFQIFNNRHCLNLKDKPKVIIIQACRGENPGELWVSDSPKASTDSWTHQPLMLQSDAIHKVHVEKDFIAFCSSTPHNVSWRHITKGSLFIAQLITCFQKYSWCCHLEGVFRKVQQSFEKPDVKAQMPTIERVSMTRYFYLFPGH.

One can recognise a CARD domain in the interval 1–91 (MADKVLKDKR…HLAQTLGLSS (91 aa)). The propeptide occupies 1 to 119 (MADKVLKDKR…SLPAFVENMP (119 aa)). Active-site residues include His237 and Cys285. A propeptide spanning residues 298 to 316 (SPKASTDSWTHQPLMLQSD) is cleaved from the precursor. Ser302 carries the phosphoserine modification.

Belongs to the peptidase C14A family. As to quaternary structure, heterotetramer that consists of two anti-parallel arranged heterodimers, each one formed by a 20 kDa (Caspase-1 subunit p20) and a 10 kDa (Caspase-1 subunit p10) subunit. May be a component of the inflammasome, a protein complex which also includes PYCARD, CARD8 and NLRP2 and whose function would be the activation of pro-inflammatory caspases. Component of the AIM2 PANoptosome complex, a multiprotein complex that drives inflammatory cell death (PANoptosis). Both the p10 and p20 subunits interact with MEFV. Interacts with CARD17P/INCA and CARD18. Interacts with SERPINB1; this interaction regulates CASP1 activity. Heterotetramer that consists of two anti-parallel arranged heterodimers, each one formed by a 20 kDa (Caspase-1 subunit p20) and a 10 kDa (Caspase-1 subunit p10) subunit. In terms of processing, the two subunits are derived from the precursor sequence by an autocatalytic mechanism. Ubiquitinated via 'Lys-11'-linked polyubiquitination. Deubiquitinated by USP8.

It is found in the cytoplasm. The protein localises to the cell membrane. It carries out the reaction Strict requirement for an Asp residue at position P1 and has a preferred cleavage sequence of Tyr-Val-Ala-Asp-|-.. In terms of biological role, thiol protease involved in a variety of inflammatory processes by proteolytically cleaving other proteins, such as the precursors of the inflammatory cytokines interleukin-1 beta (IL1B) and interleukin 18 (IL18) as well as the pyroptosis inducer Gasdermin-D (GSDMD), into active mature peptides. Plays a key role in cell immunity as an inflammatory response initiator: once activated through formation of an inflammasome complex, it initiates a pro-inflammatory response through the cleavage of the two inflammatory cytokines IL1B and IL18, releasing the mature cytokines which are involved in a variety of inflammatory processes. Cleaves a tetrapeptide after an Asp residue at position P1. Also initiates pyroptosis, a programmed lytic cell death pathway, through cleavage of GSDMD. In contrast to cleavage of interleukin IL1B, recognition and cleavage of GSDMD is not strictly dependent on the consensus cleavage site but depends on an exosite interface on CASP1 that recognizes and binds the Gasdermin-D, C-terminal (GSDMD-CT) part. Cleaves and activates CASP7 in response to bacterial infection, promoting plasma membrane repair. Upon inflammasome activation, during DNA virus infection but not RNA virus challenge, controls antiviral immunity through the cleavage of CGAS, rendering it inactive. In apoptotic cells, cleaves SPHK2 which is released from cells and remains enzymatically active extracellularly. This is Caspase-1 (CASP1) from Canis lupus familiaris (Dog).